The primary structure comprises 130 residues: Methylglyoxal synthase (130 aa).

One can recognise an MGS-like domain in the interval 1–130 (MSTPRIALIA…DLARRLTANA (130 aa)). Substrate contacts are provided by residues His11, Lys15, 37–40 (TGTT), and 57–58 (SG). Catalysis depends on Asp63, which acts as the Proton donor/acceptor. Residue His90 coordinates substrate.

The protein belongs to the methylglyoxal synthase family.

It carries out the reaction dihydroxyacetone phosphate = methylglyoxal + phosphate. Catalyzes the formation of methylglyoxal from dihydroxyacetone phosphate. This Burkholderia mallei (strain NCTC 10247) protein is Methylglyoxal synthase.